A 640-amino-acid polypeptide reads, in one-letter code: Serine/threonine-protein kinase ELM1 (640 aa).

Positions 27 to 47 (ELDSPPITPTSQTSSFGSSFS) are disordered. The span at 35-47 (PTSQTSSFGSSFS) shows a compositional bias: low complexity. The Protein kinase domain maps to 88 to 420 (YTLGVSAGSG…PIDSRNHSQI (333 aa)). ATP-binding positions include 94 to 102 (AGSGQFGYV) and lysine 117. Serine 152 carries the post-translational modification Phosphoserine. Catalysis depends on aspartate 259, which acts as the Proton acceptor. Residues serine 516 and serine 519 each carry the phosphoserine modification. The span at 520 to 529 (LPNLTVNNDK) shows a compositional bias: polar residues. Disordered regions lie at residues 520–547 (LPNL…HSSL) and 562–587 (SPKE…MDRT). Positions 530–541 (QNSDMKTDRSES) are enriched in basic and acidic residues. Residues 569–579 (RTHINCSQDKP) show a composition bias toward polar residues.

This sequence belongs to the protein kinase superfamily. Ser/Thr protein kinase family. The cofactor is Mg(2+).

The catalysed reaction is L-seryl-[protein] + ATP = O-phospho-L-seryl-[protein] + ADP + H(+). It catalyses the reaction L-threonyl-[protein] + ATP = O-phospho-L-threonyl-[protein] + ADP + H(+). Its function is as follows. Important role in G1 events required for bud emergence and septin organization. Coordinates cell growth and cell division at G2/M, essential for efficient cytokinesis and for regulation of SWE1. This chain is Serine/threonine-protein kinase ELM1 (ELM1), found in Saccharomyces cerevisiae (strain ATCC 204508 / S288c) (Baker's yeast).